The chain runs to 126 residues: Glycine cleavage system H protein (126 aa).

A Lipoyl-binding domain is found at 24-105 (TLTVGITDHA…AYGVWLFKIK (82 aa)). Residue Lys-65 is modified to N6-lipoyllysine.

It belongs to the GcvH family. As to quaternary structure, the glycine cleavage system is composed of four proteins: P, T, L and H. (R)-lipoate serves as cofactor.

In terms of biological role, the glycine cleavage system catalyzes the degradation of glycine. The H protein shuttles the methylamine group of glycine from the P protein to the T protein. This Burkholderia cenocepacia (strain HI2424) protein is Glycine cleavage system H protein.